The chain runs to 64 residues: Large ribosomal subunit protein bL35 (64 aa).

A compositionally biased stretch (basic residues) spans 1 to 14; sequence MKQKTHKGTAKRVK. Residues 1–50 form a disordered region; the sequence is MKQKTHKGTAKRVKITGSGKLRREQANRRHLLEGKPSKRTRRLKGTEDVA. Over residues 21–36 the composition is skewed to basic and acidic residues; sequence LRREQANRRHLLEGKP.

Belongs to the bacterial ribosomal protein bL35 family.

This Corynebacterium diphtheriae (strain ATCC 700971 / NCTC 13129 / Biotype gravis) protein is Large ribosomal subunit protein bL35.